We begin with the raw amino-acid sequence, 497 residues long: Gasdermin-E (497 aa).

The segment at 1–56 (MFAKATRSFLREVDAEGDLIAVSNLNDSDKSQLLSLVTKKKRFWCWQRPKYQFLSV) is membrane targeting domain. S-(2-succinyl)cysteine is present on Cys45. Residue Lys120 forms a Glycyl lysine isopeptide (Lys-Gly) (interchain with G-Cter in ubiquitin) linkage. S-(2-succinyl)cysteine occurs at positions 156, 168, and 180. Lys189 is covalently cross-linked (Glycyl lysine isopeptide (Lys-Gly) (interchain with G-Cter in ubiquitin)). An S-(2-succinyl)cysteine mark is found at Cys235, Cys371, Cys409, Cys418, and Cys491.

This sequence belongs to the gasdermin family. In terms of assembly, homooligomer; homooligomeric ring-shaped pore complex containing 27-28 subunits when inserted in the membrane. In terms of processing, cleavage at Asp-270 by CASP3 (mature and uncleaved precursor forms) or granzyme B (GZMB) relieves autoinhibition and is sufficient to initiate pyroptosis. Post-translationally, succination by the Krebs cycle intermediate fumarate, which leads to S-(2-succinyl)cysteine residues, inhibits processing by caspases, and ability to initiate pyroptosis. Succination modification is catalyzed by a non-enzymatic reaction caused by an accumulation of fumarate. Ubiquitinated on Lys-120 and Lys-189 via 'Lys-48'-linked polyubiquitin chains, leading to proteasomal degradation. Deubiquitinated by USP48, leading to increased stability. In terms of processing, palmitoylated.

The protein resides in the cell membrane. Its subcellular location is the cytoplasm. It is found in the cytosol. The full-length protein before cleavage is inactive: intramolecular interactions between N- and C-terminal domains mediate autoinhibition in the absence of activation signal. The intrinsic pyroptosis-inducing activity is carried by the released N-terminal moiety (Gasdermin-E, N-terminal) following cleavage by CASP3 or granzyme B (GZMB). Activated by NLRP1 in the absence of GSDMD expression: NLRP1 cleaves and activates CASP8, promoting downstream activation of CASP3 and subsequent activation of GSDME. Precursor of a pore-forming protein that converts non-inflammatory apoptosis to pyroptosis. This form constitutes the precursor of the pore-forming protein: upon cleavage, the released N-terminal moiety (Gasdermin-E, N-terminal) binds to membranes and forms pores, triggering pyroptosis. Its function is as follows. Pore-forming protein produced by cleavage by CASP3 or granzyme B (GZMB), which converts non-inflammatory apoptosis to pyroptosis or promotes granzyme-mediated pyroptosis, respectively. After cleavage, moves to the plasma membrane, homooligomerizes within the membrane and forms pores of 10-15 nanometers (nm) of inner diameter, allowing the release of mature interleukins (IL1B and IL16) and triggering pyroptosis. Binds to inner leaflet lipids, bisphosphorylated phosphatidylinositols, such as phosphatidylinositol (4,5)-bisphosphate. Cleavage by CASP3 switches CASP3-mediated apoptosis induced by TNF or danger signals, such as chemotherapy drugs, to pyroptosis. Mediates secondary necrosis downstream of the mitochondrial apoptotic pathway and CASP3 activation as well as in response to viral agents. Exhibits bactericidal activity. Cleavage by GZMB promotes tumor suppressor activity by triggering robust anti-tumor immunity. Suppresses tumors by mediating granzyme-mediated pyroptosis in target cells of natural killer (NK) cells: cleavage by granzyme B (GZMB), delivered to target cells from NK-cells, triggers pyroptosis of tumor cells and tumor suppression. May play a role in the p53/TP53-regulated cellular response to DNA damage. This chain is Gasdermin-E, found in Equus caballus (Horse).